Consider the following 102-residue polypeptide: Large ribosomal subunit protein bL21 (102 aa).

This sequence belongs to the bacterial ribosomal protein bL21 family. As to quaternary structure, part of the 50S ribosomal subunit. Contacts protein L20.

This protein binds to 23S rRNA in the presence of protein L20. This chain is Large ribosomal subunit protein bL21, found in Myxococcus xanthus (strain DK1622).